The following is a 173-amino-acid chain: Large ribosomal subunit protein uL10 (173 aa).

This sequence belongs to the universal ribosomal protein uL10 family. In terms of assembly, part of the ribosomal stalk of the 50S ribosomal subunit. The N-terminus interacts with L11 and the large rRNA to form the base of the stalk. The C-terminus forms an elongated spine to which L12 dimers bind in a sequential fashion forming a multimeric L10(L12)X complex.

In terms of biological role, forms part of the ribosomal stalk, playing a central role in the interaction of the ribosome with GTP-bound translation factors. In Bifidobacterium longum (strain DJO10A), this protein is Large ribosomal subunit protein uL10.